The chain runs to 478 residues: Cytochrome P450 monooxygenase asqL (478 aa).

C407 contributes to the heme binding site.

This sequence belongs to the cytochrome P450 family. Requires heme as cofactor.

Its pathway is secondary metabolite biosynthesis. It participates in alkaloid biosynthesis. It functions in the pathway mycotoxin biosynthesis. In terms of biological role, cytochrome P450 monooxygenase; part of the gene cluster that mediates the biosynthesis of the aspoquinolone mycotoxins. The role of asqL within the aspoquinolone pathway has still to be determined. The first step of the pathway is catalyzed by the nonribosomal peptide synthetase asqK that condenses anthranilic acid and O-methyl-L-tyrosine to produce 4'-methoxycyclopeptin. 4'-methoxycyclopeptin is then converted to 4'-methoxydehydrocyclopeptin by the ketoglutarate-dependent dioxygenase asqJ. AsqJ also converts its first product 4'-methoxydehydrocyclopeptin to 4'-methoxycyclopenin. The following conversion of 4'-methoxycyclopenin into 4'-methoxyviridicatin is catalyzed by the cyclopenase asqI. 4'-methoxyviridicatin is the precursor of quinolone natural products, and is further converted to quinolinone B. The prenyltransferase asqH1 then catalyzes the canonical Friedel-Crafts alkylation of quinolinone B with dimethylallyl cation to yield dimethylallyl quinolone, which is subjected to FAD-dependent dehydrogenation by the FAD-linked oxidoreductase asqF to yield conjugated aryl diene. The delta(3') double bond then serves as the site of the second alkylation with DMAPP catalyzed by the prenyltransferase asqH2 to yield a carbenium ion intermediate, which can be attacked by H(2)O to yield a styrenyl quinolone containing a C3'-hydroxyprenyl chain. The FAD-dependent monooxygenase asqG performs epoxidation of the terminal C7'-C8' olefin. Finally, after dehydratation of the epoxide at C3 by asqC, the quinolone epoxide rearrangement protein asqO catalyzes an enzymatic 3-exo-tet cyclization to yield the cyclopropyl-THF ring system in aspoquinolone. The protein is Cytochrome P450 monooxygenase asqL of Emericella nidulans (strain FGSC A4 / ATCC 38163 / CBS 112.46 / NRRL 194 / M139) (Aspergillus nidulans).